We begin with the raw amino-acid sequence, 253 residues long: DNA repair protein RecO (253 aa).

It belongs to the RecO family.

Functionally, involved in DNA repair and RecF pathway recombination. The protein is DNA repair protein RecO of Nitrobacter hamburgensis (strain DSM 10229 / NCIMB 13809 / X14).